The primary structure comprises 33 residues: Lysozyme C, spleen isozyme (33 aa).

Belongs to the glycosyl hydrolase 22 family. As to quaternary structure, monomer.

It carries out the reaction Hydrolysis of (1-&gt;4)-beta-linkages between N-acetylmuramic acid and N-acetyl-D-glucosamine residues in a peptidoglycan and between N-acetyl-D-glucosamine residues in chitodextrins.. Lysozymes have primarily a bacteriolytic function; those in tissues and body fluids are associated with the monocyte-macrophage system and enhance the activity of immunoagents. This Equus caballus (Horse) protein is Lysozyme C, spleen isozyme.